A 614-amino-acid chain; its full sequence is Inactive leucine-rich repeat receptor-like serine/threonine-protein kinase At5g24100 (614 aa).

The signal sequence occupies residues 1–21; the sequence is MSRGRSFIFYFVLFLFFGSSA. Residues 22–251 lie on the Extracellular side of the membrane; that stretch reads LYSQVTGDLA…KNGIYISEPA (230 aa). Residue asparagine 53 is glycosylated (N-linked (GlcNAc...) asparagine). 6 LRR repeats span residues 71–95, 96–120, 121–146, 148–167, 168–190, and 191–214; these read GTRV…TISR, LSEL…FLQL, KKLK…TWTN, TVLD…GFAN, LTGL…DLNL, and PGLR…LKRF. 3 N-linked (GlcNAc...) asparagine glycosylation sites follow: asparagine 146, asparagine 158, and asparagine 167. N-linked (GlcNAc...) asparagine glycans are attached at residues asparagine 197 and asparagine 202. The chain crosses the membrane as a helical span at residues 252–272; the sequence is ILGIAISVCFVIFFVIAVVII. The Cytoplasmic segment spans residues 273–614; that stretch reads VCYVKRQRKS…VETLEEIERD (342 aa). The Protein kinase domain occupies 341 to 611; the sequence is IASAEFLGKG…VKVVETLEEI (271 aa). Phosphoserine is present on serine 343. ATP-binding positions include 347–355 and lysine 369; that span reads LGKGVFGMT. Position 420 is a phosphoserine (serine 420). Phosphothreonine occurs at positions 441, 514, and 591. An LRR 7 repeat occupies 578 to 601; sequence AKLLQMLQLGTSCTAMVPAKRPDM.

It belongs to the protein kinase superfamily. Ser/Thr protein kinase family.

It is found in the cell membrane. This is Inactive leucine-rich repeat receptor-like serine/threonine-protein kinase At5g24100 from Arabidopsis thaliana (Mouse-ear cress).